Reading from the N-terminus, the 176-residue chain is RNA 2',3'-cyclic phosphodiesterase (176 aa).

H43 functions as the Proton donor in the catalytic mechanism. Short sequence motifs (HXTX) lie at residues 43–46 and 125–128; these read HLTL and HITL. Catalysis depends on H125, which acts as the Proton acceptor.

The protein belongs to the 2H phosphoesterase superfamily. ThpR family. Monomer.

The catalysed reaction is a 3'-end 2',3'-cyclophospho-ribonucleotide-RNA + H2O = a 3'-end 2'-phospho-ribonucleotide-RNA + H(+). In terms of biological role, hydrolyzes RNA 2',3'-cyclic phosphodiester to an RNA 2'-phosphomonoester. In vitro, can also ligate 5' and 3' half-tRNA molecules with 2',3'-cyclic phosphate and 5'-hydroxyl termini, respectively, to the product containing the 2'-5' phosphodiester linkage. This reaction does not require ATP and is reversible. This Escherichia coli (strain K12) protein is RNA 2',3'-cyclic phosphodiesterase.